A 366-amino-acid polypeptide reads, in one-letter code: Transmembrane protein 26 (366 aa).

The next 3 membrane-spanning stretches (helical) occupy residues 4–24, 36–56, and 64–84; these read LVLLKALVTRLLFLLHSLVAV, YWLLALLNLLLVLETVLTLKF, and WLSPAIFVYLVNIMPSLWLLE. An N-linked (GlcNAc...) asparagine glycan is attached at asparagine 110. 5 consecutive transmembrane segments (helical) span residues 138 to 158, 176 to 196, 208 to 228, 258 to 278, and 282 to 302; these read MVCEPVWTLGLHQTLLLILII, ELLLMFVGTAADILEFTTETL, VSGILVVWTWSMLQFPLDLAV, IGLSFFIQDGPFLVVRLVLMI, and VINHMLVFFAVKNSLVMALHF. Residues 319–329 show a composition bias toward basic and acidic residues; that stretch reads HPESPKPEHSG. The tract at residues 319-366 is disordered; it reads HPESPKPEHSGPDQPSESGPSEWEDASPEALPLRTSPVTSEESYPTTP. The span at 354 to 366 shows a compositional bias: polar residues; that stretch reads SPVTSEESYPTTP.

Its subcellular location is the membrane. The protein is Transmembrane protein 26 (Tmem26) of Mus musculus (Mouse).